A 580-amino-acid chain; its full sequence is Tyrosyl-DNA phosphodiesterase 1 (580 aa).

A disordered region spans residues 65-117; that stretch reads ATNKEQEAHSSSSKPAVTAPVASGSSSSGSLDTNPSGSSASGPAASQDTSNLA. The span at 87–110 shows a compositional bias: low complexity; sequence SGSSSSGSLDTNPSGSSASGPAAS. The active-site Nucleophile is histidine 248. Residue lysine 250 coordinates substrate. An interaction with DNA region spans residues 387–390; it reads SIGS. Catalysis depends on histidine 479, which acts as the Proton donor/acceptor. Lysine 481 contacts substrate.

Belongs to the tyrosyl-DNA phosphodiesterase family. Expressed in the body and at higher levels in the head. Expressed in the delaminating neuroblasts and a few ganglion mother cells in stage 11-14 embryonic central nervous system. Weak expression is seen in gonads at stage 16. Expressed in the brain; expression is regulated by DIP2.

The protein localises to the nucleus. It is found in the cytoplasm. Functionally, DNA repair enzyme that can remove a variety of covalent adducts from DNA through hydrolysis of a 3'-phosphodiester bond, giving rise to DNA with a free 3' phosphate. Catalyzes the hydrolysis of dead-end complexes between DNA and the topoisomerase I active site tyrosine residue. Hydrolyzes 3'-phosphoglycolates on protruding 3' ends on DNA double-strand breaks due to DNA damage by radiation and free radicals. Acts on blunt-ended double-strand DNA breaks and on single-stranded DNA. May have low 3'exonuclease activity and may be able to remove a single nucleoside from the 3'end of DNA and RNA molecules with 3'hydroxyl groups. Has no exonuclease activity towards DNA or RNA with a 3'phosphate. Required for normal polarization of epidermal cells, correct subcellular location of the Crb complex to the apical lateral membrane, and for normal neuronal development during embryonic development. Contributes to maintenance of epithelial cells in response to topoisomerase-1-mediated and oxidative DNA damage. Required for precise axonal bifurcation in mushroom body neurons. Required for maintenance of normal neuronal function. In Drosophila melanogaster (Fruit fly), this protein is Tyrosyl-DNA phosphodiesterase 1.